Here is a 242-residue protein sequence, read N- to C-terminus: Triosephosphate isomerase (242 aa).

9–11 lines the substrate pocket; the sequence is NWK. The active-site Electrophile is the histidine 90. Catalysis depends on glutamate 162, which acts as the Proton acceptor. Substrate-binding positions include glycine 168, serine 205, and 226 to 227; that span reads GG.

The protein belongs to the triosephosphate isomerase family. Homodimer.

Its subcellular location is the cytoplasm. It catalyses the reaction D-glyceraldehyde 3-phosphate = dihydroxyacetone phosphate. It functions in the pathway carbohydrate biosynthesis; gluconeogenesis. The protein operates within carbohydrate degradation; glycolysis; D-glyceraldehyde 3-phosphate from glycerone phosphate: step 1/1. Involved in the gluconeogenesis. Catalyzes stereospecifically the conversion of dihydroxyacetone phosphate (DHAP) to D-glyceraldehyde-3-phosphate (G3P). This Azoarcus sp. (strain BH72) protein is Triosephosphate isomerase.